Consider the following 366-residue polypeptide: Putative transcription factor PHD1 (366 aa).

In terms of domain architecture, HTH APSES-type spans Arg186–Arg292. Residues Gly220–Glu241 constitute a DNA-binding region (H-T-H motif). Residues Pro294 to Ser366 form a disordered region. Residues Glu312 to Ser328 show a composition bias toward basic and acidic residues.

Belongs to the EFG1/PHD1/stuA family.

Its subcellular location is the nucleus. Its function is as follows. Putative transcription factor that functions in pseudohyphal growth. The polypeptide is Putative transcription factor PHD1 (PHD1) (Saccharomyces cerevisiae (strain ATCC 204508 / S288c) (Baker's yeast)).